Here is a 426-residue protein sequence, read N- to C-terminus: MLDIKRIRNDFDQIAEKLARRGVDEKTLHDLKELDFKRRQLLIKSEEAKAERNTASAAIAQAKRNQEDASEQIADMQKLSAEIKALDAQLVEIDGQLKTFTTTLPNIPADDVPLGADEDENVEMRRWGKPRQFDFDIKAHWDLGEDLDILDWERGSKVTGSRFLFYKGLGARLERAIYNFMLDEHAKEGYTEVIPPYMVNHDSMFGTGQYPKFKEDTFELADNDYVLIPTAEVPLTNYYRGEIIDGKELPIYFTAMSPSFRSEAGSAGRDTRGLIRLHQFHKVEMVKFAKPEDSYNELEKMTANAENILQKLELPYRVITLCTGDMGFSAAKTYDLEVWIPAQNTYREISSCSNTEDFQARRAQIRYRDEVDGKVKLLHTLNGSGLAVGRTVAAILENYQNADGSVTIPEVLRPYIGGVQVISPQS.

230–232 contacts L-serine; that stretch reads TAE. ATP is bound at residue 261–263; sequence RSE. Glu284 lines the L-serine pocket. 348-351 is an ATP binding site; sequence EISS. Residue Ser384 participates in L-serine binding.

It belongs to the class-II aminoacyl-tRNA synthetase family. Type-1 seryl-tRNA synthetase subfamily. Homodimer. The tRNA molecule binds across the dimer.

The protein localises to the cytoplasm. The catalysed reaction is tRNA(Ser) + L-serine + ATP = L-seryl-tRNA(Ser) + AMP + diphosphate + H(+). The enzyme catalyses tRNA(Sec) + L-serine + ATP = L-seryl-tRNA(Sec) + AMP + diphosphate + H(+). It participates in aminoacyl-tRNA biosynthesis; selenocysteinyl-tRNA(Sec) biosynthesis; L-seryl-tRNA(Sec) from L-serine and tRNA(Sec): step 1/1. Catalyzes the attachment of serine to tRNA(Ser). Is also able to aminoacylate tRNA(Sec) with serine, to form the misacylated tRNA L-seryl-tRNA(Sec), which will be further converted into selenocysteinyl-tRNA(Sec). This is Serine--tRNA ligase from Streptococcus mutans serotype c (strain ATCC 700610 / UA159).